The sequence spans 120 residues: Large ribosomal subunit protein bL20 (120 aa).

This sequence belongs to the bacterial ribosomal protein bL20 family.

Functionally, binds directly to 23S ribosomal RNA and is necessary for the in vitro assembly process of the 50S ribosomal subunit. It is not involved in the protein synthesizing functions of that subunit. The polypeptide is Large ribosomal subunit protein bL20 (Novosphingobium aromaticivorans (strain ATCC 700278 / DSM 12444 / CCUG 56034 / CIP 105152 / NBRC 16084 / F199)).